The primary structure comprises 270 residues: tRNA pseudouridine synthase A (270 aa).

D60 acts as the Nucleophile in catalysis. The interval 107-111 (FHARF) is RNA binding. Y118 serves as a coordination point for substrate. The interaction with tRNA stretch occupies residues 168–172 (QCQSR).

This sequence belongs to the tRNA pseudouridine synthase TruA family. Homodimer.

The enzyme catalyses uridine(38/39/40) in tRNA = pseudouridine(38/39/40) in tRNA. In terms of biological role, formation of pseudouridine at positions 38, 39 and 40 in the anticodon stem and loop of transfer RNAs. The sequence is that of tRNA pseudouridine synthase A from Klebsiella pneumoniae subsp. pneumoniae (strain ATCC 700721 / MGH 78578).